Reading from the N-terminus, the 412-residue chain is Solute carrier family 22 member 18 (412 aa).

10 helical membrane-spanning segments follow: residues 16 to 36 (GIIILTYVLAALELTCLFMQF), 51 to 71 (VSFGYLQTTFGVLQLLGGPVF), 117 to 137 (LPAALMHTLPAAQMVITDLTA), 148 to 168 (LGLCFGIGVIFGSLLGGTLST), 176 to 196 (AFLAFVVTLLGAVLSFTCIPV), 232 to 252 (FLVKVISGFPSGLFMVMFSII), 264 to 284 (AGYLMSFFGILQMMIQGLVIG), 294 to 314 (ALLRSSVLVFAVVGLGMALMS), 316 to 336 (VFHFCLLLPGLVFSLCALNIV), and 380 to 400 (GVSILGHVQLMVNLLVLLVLW).

It belongs to the major facilitator (TC 2.A.1) superfamily. Organic cation transporter (TC 2.A.1.19) family.

It localises to the apical cell membrane. Its function is as follows. May act as a transporter of organic cations based on a proton efflux antiport mechanism. May play a role in the transport of chloroquine and quinidine-related compounds in kidney. Plays a role in the regulation of lipid metabolism. The chain is Solute carrier family 22 member 18 (Slc67a1) from Rattus norvegicus (Rat).